A 556-amino-acid chain; its full sequence is MKLFLTQSANVGDVKAYLLHEVFRAAAQKANVSIVGTPAEADLVLVFGSVLPNNPDLVGKKVFIIGEAIAMISPEVTLANALANGADYVAPKSAVSFTGVSGVKNIVAVTACPTGVAHTFMSAEAIEAYAKKQGWNVKVETRGQVGAGNEITVEEVAAADLVFVAADIDVPLDKFKGKPMYRTSTGLALKKTEQEFDKAFKEAKIFDGGNNAGTKEESREKKGVYKHLMTGVSHMLPLVVAGGLLIAISFMFSFNVIENTGVFQDLPNMLINIGSGVAFKLMIAVFAGYVAFSIADRPGLAVGLIAGMLASEAGAGILGGIIAGFLAGYVVKGLNVIIRLPASLTSLKPILILPLLGSMIVGLTMIYLINPPVAEIMKELSNWLTSMGEVNAIVLGAIIGAMMCIDMGGPVNKAAYTFSVGLIASQVYTPMAAAMAAGMVPPIGMTVATWIARNKFTVSQCDAGKASFVLGLCFISEGALPFVAADPIRVIISSVIGGAVAGAISMGLNITLQAPHGGLFVIPFVSEPLKYLGAIAIGALSTGVVYAIIKSKNNAE.

PTS EIIB type-2 domains are found at residues 1–85 (MKLF…LANG) and 106–201 (IVAV…KAFK). Residue Cys112 is the Phosphocysteine intermediate; for EIIB activity of the active site. Cys112 carries the phosphocysteine; by EIIA modification. In terms of domain architecture, PTS EIIC type-2 spans 224–556 (VYKHLMTGVS…AIIKSKNNAE (333 aa)). 10 helical membrane passes run 237-257 (PLVV…FNVI), 275-295 (SGVA…FSIA), 302-322 (VGLI…GGII), 324-344 (GFLA…PASL), 349-369 (PILI…IYLI), 390-410 (VNAI…MGGP), 431-451 (MAAA…ATWI), 468-488 (FVLG…ADPI), 490-510 (VIIS…GLNI), and 529-549 (LKYL…YAII).

The protein resides in the cell inner membrane. It carries out the reaction D-fructose(out) + N(pros)-phospho-L-histidyl-[protein] = D-fructose 1-phosphate(in) + L-histidyl-[protein]. Its function is as follows. The phosphoenolpyruvate-dependent sugar phosphotransferase system (sugar PTS), a major carbohydrate active transport system, catalyzes the phosphorylation of incoming sugar substrates concomitantly with their translocation across the cell membrane. The enzyme II FruAB PTS system is involved in fructose transport. This is PTS system fructose-specific EIIB'BC component from Haemophilus influenzae (strain ATCC 51907 / DSM 11121 / KW20 / Rd).